The sequence spans 364 residues: Probable tartrate dehydrogenase/decarboxylase TtuC (364 aa).

Mn(2+) contacts are provided by Asp-222, Asp-246, and Asp-250.

Belongs to the isocitrate and isopropylmalate dehydrogenases family. Mg(2+) is required as a cofactor. Mn(2+) serves as cofactor. Requires K(+) as cofactor.

It localises to the cytoplasm. The catalysed reaction is tartrate + NAD(+) = 2-hydroxy-3-oxosuccinate + NADH + H(+). It carries out the reaction (2R,3S)-tartrate + NAD(+) = 2-hydroxy-3-oxosuccinate + NADH + H(+). The enzyme catalyses (2R,3R)-tartrate + NAD(+) = 2-hydroxy-3-oxosuccinate + NADH + H(+). It catalyses the reaction (2R,3R)-tartrate + H(+) = (R)-glycerate + CO2. The catalysed reaction is (R)-malate + NAD(+) = pyruvate + CO2 + NADH. The protein operates within carbohydrate acid metabolism; tartrate degradation; 2-hydroxy-3-oxosuccinate from L-tartrate: step 1/1. Its pathway is carbohydrate acid metabolism; tartrate degradation; 2-hydroxy-3-oxosuccinate from meso-tartrate: step 1/1. It functions in the pathway carbohydrate acid metabolism; tartrate degradation; D-glycerate from L-tartrate: step 1/1. Has multiple catalytic activities. Apart from catalyzing the oxidation of (+)-tartrate to oxaloglycolate, also converts meso-tartrate to D-glycerate and catalyzes the oxidative decarboxylation of D-malate to pyruvate. The protein is Probable tartrate dehydrogenase/decarboxylase TtuC (ttuC) of Agrobacterium vitis (Rhizobium vitis).